The following is a 242-amino-acid chain: MAEPEERSLDDFFAKRDKKKKKDKGGSGSAAGSRGPARPSDGATSSSLSSYVSAAGKGVKKEKSGKSENPDQLQEKEEDEWKEFEQKEVDYSGLRLQSLQISNEKEDDENENKEEQGADWEESGGFGSDKSSGPWNKTAQAQAPISAVEEAPEPVHTGGVYRPPGARASVTTRKPQGPPEIYSDTQFPSPQATAKHTESRREKEMEKTFEIVKHKNRASNEAAKNPAPRPQLDNQYAVLGEQ.

Over residues 1–15 (MAEPEERSLDDFFAK) the composition is skewed to basic and acidic residues. The disordered stretch occupies residues 1–242 (MAEPEERSLD…DNQYAVLGEQ (242 aa)). An N-acetylalanine modification is found at alanine 2. Residues 30–57 (AAGSRGPARPSDGATSSSLSSYVSAAGK) show a composition bias toward low complexity. Over residues 59-75 (VKKEKSGKSENPDQLQE) the composition is skewed to basic and acidic residues. Acidic residues predominate over residues 105–122 (KEDDENENKEEQGADWEE). Composition is skewed to polar residues over residues 129-143 (DKSS…QAQA) and 183-194 (SDTQFPSPQATA). Basic and acidic residues predominate over residues 195–213 (KHTESRREKEMEKTFEIVK).

The protein belongs to the CDV3 family.

The protein resides in the cytoplasm. The protein is Protein CDV3 homolog B (cdv3-b) of Xenopus laevis (African clawed frog).